We begin with the raw amino-acid sequence, 64 residues long: Defensin-like protein 123 (64 aa).

Cystine bridges form between Cys19/Cys62, Cys29/Cys49, Cys34/Cys56, and Cys38/Cys58.

This sequence belongs to the DEFL family.

This Arabidopsis thaliana (Mouse-ear cress) protein is Defensin-like protein 123.